The primary structure comprises 108 residues: ATP synthase epsilon chain (108 aa).

The protein belongs to the ATPase epsilon chain family. As to quaternary structure, F-type ATPases have 2 components, CF(1) - the catalytic core - and CF(0) - the membrane proton channel. CF(1) has five subunits: alpha(3), beta(3), gamma(1), delta(1), epsilon(1). CF(0) has three main subunits: a, b and c.

It is found in the cell inner membrane. Functionally, produces ATP from ADP in the presence of a proton gradient across the membrane. This is ATP synthase epsilon chain from Rickettsia bellii (strain OSU 85-389).